A 574-amino-acid chain; its full sequence is Regulatory protein NPR4 (574 aa).

The tract at residues M1–N21 is disordered. Positions S9–S20 are enriched in low complexity. Phosphoserine is present on S11. The BTB domain occupies T54 to P130. Residues V133 to K147 form a C2HC NPR-type zinc finger. 4 residues coordinate Zn(2+): C136, C141, H143, and C146. ANK repeat units lie at residues E252–L280, D281–F311, and R315–D344. The interval E373–P516 is salicylic acid-binding core (SBC). A salicylate-binding site is contributed by R419. Residues P521–T574 form a disordered region. The segment covering R535 to A553 has biased composition (basic and acidic residues). Residues R554–R567 are compositionally biased toward low complexity.

This sequence belongs to the plant 'ANKYRIN-BTB/POZ' family. 'NPR1-like' subfamily. As to quaternary structure, forms homodimers, homotetramers and heterodimers with NPR3 in the presence of salicylic acid (SA). Interacts with TGA2, TGA3, TGA5, TGA6 and TGA7. Interacts with CUL3A, a core component of the cullin-RING ubiquitin ligases (CRL). Binds to NPR1; this interaction is disrupted by association with SA, probably due to conformational changes.

It localises to the nucleus. The protein operates within protein modification; protein ubiquitination. In terms of biological role, salicylic acid (SA)-binding substrate-specific adapter of an E3 ubiquitin-protein ligase complex (CUL3-RBX1-BTB) which mediates the ubiquitination and subsequent proteasomal degradation of NPR1 in the absence of SA. Together with NPR3, acts as receptor of salicylic acid to monitor immunity in a NPR1-dependent manner and induce systemic acquired resistance (SAR). Involved in the regulation of basal defense responses against pathogens, and may be implicated in the cross-talk between the SA- and JA-dependent signaling pathways. This is Regulatory protein NPR4 from Arabidopsis thaliana (Mouse-ear cress).